We begin with the raw amino-acid sequence, 438 residues long: Thymidine phosphorylase (438 aa).

This sequence belongs to the thymidine/pyrimidine-nucleoside phosphorylase family. In terms of assembly, homodimer.

It catalyses the reaction thymidine + phosphate = 2-deoxy-alpha-D-ribose 1-phosphate + thymine. The protein operates within pyrimidine metabolism; dTMP biosynthesis via salvage pathway; dTMP from thymine: step 1/2. Functionally, the enzymes which catalyze the reversible phosphorolysis of pyrimidine nucleosides are involved in the degradation of these compounds and in their utilization as carbon and energy sources, or in the rescue of pyrimidine bases for nucleotide synthesis. The chain is Thymidine phosphorylase from Colwellia psychrerythraea (strain 34H / ATCC BAA-681) (Vibrio psychroerythus).